Reading from the N-terminus, the 1760-residue chain is Cilia- and flagella-associated protein 44 (1760 aa).

WD repeat units lie at residues 119–160 (GATK…MVLR), 163–202 (CHNT…TGLK), 213–251 (LEIS…CCFA), 276–315 (CHEG…VAEG), and 388–427 (FNGG…ELYK). The segment covering 1155–1165 (RQEEKLREQTA) has biased composition (basic and acidic residues). Residues 1155–1224 (RQEEKLREQT…FGTAAARTRS (70 aa)) are disordered. The span at 1181-1190 (PATNTDTSGA) shows a compositional bias: polar residues. Residues 1194-1205 (ATRRSEGEDSRK) show a composition bias toward basic and acidic residues. A coiled-coil region spans residues 1348–1389 (YDEARNSRDRCLREMEELQRLVQDQTASIEKLQEANKVFRRE). The interval 1420-1444 (HSDMSGNDDDITSDDDDDDDMGEDE) is disordered. Positions 1425-1444 (GNDDDITSDDDDDDDMGEDE) are enriched in acidic residues.

Belongs to the CFAP44 family.

It is found in the cell projection. The protein localises to the cilium. It localises to the flagellum. The protein resides in the cytoplasm. Its subcellular location is the cytoskeleton. It is found in the flagellum axoneme. Flagellar protein involved in flagellum axoneme organization and function. The sequence is that of Cilia- and flagella-associated protein 44 from Trypanosoma brucei brucei (strain 927/4 GUTat10.1).